Reading from the N-terminus, the 559-residue chain is Acetolactate synthase, catabolic (559 aa).

Residues Arg-159, 263 to 284, and 304 to 323 each bind FAD; these read FNNQ…IGYS and DVLP…LVGD. Asp-447 is a binding site for Mg(2+).

It belongs to the TPP enzyme family. In terms of assembly, homodimer.

The enzyme catalyses 2 pyruvate + H(+) = (2S)-2-acetolactate + CO2. It participates in polyol metabolism; (R,R)-butane-2,3-diol biosynthesis; (R,R)-butane-2,3-diol from pyruvate: step 1/3. The chain is Acetolactate synthase, catabolic (budB) from Raoultella terrigena (Klebsiella terrigena).